Reading from the N-terminus, the 290-residue chain is Elongation factor Ts (290 aa).

Positions 81–84 (TDFV) are involved in Mg(2+) ion dislocation from EF-Tu.

This sequence belongs to the EF-Ts family.

Its subcellular location is the cytoplasm. Associates with the EF-Tu.GDP complex and induces the exchange of GDP to GTP. It remains bound to the aminoacyl-tRNA.EF-Tu.GTP complex up to the GTP hydrolysis stage on the ribosome. The sequence is that of Elongation factor Ts from Saccharophagus degradans (strain 2-40 / ATCC 43961 / DSM 17024).